An 880-amino-acid polypeptide reads, in one-letter code: DNA-directed RNA polymerase subunit Rpo1N (880 aa).

Residues Cys-58, Cys-61, Cys-68, His-71, Cys-98, Cys-101, Cys-146, and Cys-149 each contribute to the Zn(2+) site. Positions 456, 458, and 460 each coordinate Mg(2+). Arg-573, Cys-575, Cys-580, His-582, and Ser-584 together coordinate Zn(2+).

This sequence belongs to the RNA polymerase beta' chain family. As to quaternary structure, part of the 13-subunit RNA polymerase complex. Interacts with TFS4. (Microbial infection) Binds viral protein RIP, which blocks global transcription. Requires Mg(2+) as cofactor. It depends on Zn(2+) as a cofactor.

It localises to the cytoplasm. The enzyme catalyses RNA(n) + a ribonucleoside 5'-triphosphate = RNA(n+1) + diphosphate. With respect to regulation, (Microbial infection) Binds to viral protein RIP (AC Q3V4R7), which inhibits global transcription. DNA-dependent RNA polymerase (RNAP) catalyzes the transcription of DNA into RNA using the four ribonucleoside triphosphates as substrates. Forms the clamp head domain. In Sulfolobus acidocaldarius (strain ATCC 33909 / DSM 639 / JCM 8929 / NBRC 15157 / NCIMB 11770), this protein is DNA-directed RNA polymerase subunit Rpo1N.